We begin with the raw amino-acid sequence, 347 residues long: NADH-ubiquinone oxidoreductase chain 2 (347 aa).

11 consecutive transmembrane segments (helical) span residues 1–21 (MNPL…MIVM), 25–45 (HWLT…PILM), 59–79 (YFLT…INLL), 96–116 (IIMT…FWVP), 122–142 (IQLS…MSIL), 145–165 (IFPT…VAIG), 178–198 (IMAY…AYNP), 201–221 (TLLN…MFML), 237–257 (APLL…LPPL), 276–296 (IITP…YMRL), and 326–346 (VSPL…LMLL).

It belongs to the complex I subunit 2 family. Core subunit of respiratory chain NADH dehydrogenase (Complex I) which is composed of 45 different subunits. Interacts with TMEM242.

The protein localises to the mitochondrion inner membrane. It catalyses the reaction a ubiquinone + NADH + 5 H(+)(in) = a ubiquinol + NAD(+) + 4 H(+)(out). Core subunit of the mitochondrial membrane respiratory chain NADH dehydrogenase (Complex I) which catalyzes electron transfer from NADH through the respiratory chain, using ubiquinone as an electron acceptor. Essential for the catalytic activity and assembly of complex I. In Boneia bidens (Manado fruit bat), this protein is NADH-ubiquinone oxidoreductase chain 2.